The primary structure comprises 649 residues: Probable cyclic nucleotide-gated ion channel 12 (649 aa).

The Cytoplasmic portion of the chain corresponds to M1–T43. A helical transmembrane segment spans residues V44 to I64. Residues D65–T76 are Extracellular-facing. Residues L77–I97 traverse the membrane as a helical segment. At Y98 to R128 the chain is on the cytoplasmic side. Residues L129–L149 traverse the membrane as a helical segment. The Extracellular segment spans residues T150–R162. Residues I163–Y183 traverse the membrane as a helical segment. The Cytoplasmic segment spans residues K184 to G200. A helical transmembrane segment spans residues A201 to L221. Topologically, residues S222–G329 are extracellular. A helical transmembrane segment spans residues E330 to G350. The Cytoplasmic portion of the chain corresponds to N351 to A649. A nucleoside 3',5'-cyclic phosphate contacts are provided by residues L436–L559 and E507. The segment at L545 to Y560 is calmodulin-binding. The 30-residue stretch at R565–P594 folds into the IQ domain. The tract at residues R618–A649 is disordered. Residues K638–A649 are compositionally biased toward basic and acidic residues.

The protein belongs to the cyclic nucleotide-gated cation channel (TC 1.A.1.5) family. In terms of assembly, homotetramer or heterotetramer.

Its subcellular location is the cell membrane. Functionally, probable cyclic nucleotide-gated ion channel. This Arabidopsis thaliana (Mouse-ear cress) protein is Probable cyclic nucleotide-gated ion channel 12 (CNGC12).